The sequence spans 60 residues: Movement protein TGBp3 (60 aa).

The Lumenal portion of the chain corresponds to 1-6 (MHYIDW). The chain crosses the membrane as a helical span at residues 7-23 (VILLTFAAALIVCLTPK). Topologically, residues 24-60 (PEPCIITVSGASATVSNCPNPELLTDLVKALKPAKPV) are cytoplasmic.

It belongs to the Tymovirales TGBp3 protein family.

It is found in the host endoplasmic reticulum membrane. Plays a role in viral cell-to-cell propagation, by facilitating genome transport to neighboring plant cells through plasmosdesmata. May induce the formation of granular vesicles derived from the Endoplasmic reticulum, which align on actin filaments. The sequence is that of Movement protein TGBp3 from Citrus (ICRSV).